Reading from the N-terminus, the 496-residue chain is MLQTSIKKIHGKLKGSNLNTAEVIVNSFKRAEQVLELNSFISMNNNAGLQVESSNEYFKNGKPRSLLEGIPIAVKDNFCVKDTLTTCGSKMLQNFRPKYTATVVQKLLDSGAILVGKTNMDEFAMGSGTTTSIFGPTKNIWGSRFSNLCIQEKNDWFIPGGSSGGSAVAVASGICLGALGSDTGGSCRNPASYCGIVGLKPTYGLLSRYGLIPLVNSMDVPAIMALNVEDTACLLGIMMGRDENDSTTVSKNLNLALNYSSSSVKGLKIGIPAEYNCQGLSDEIRSAWNDIAKVLYQGGASIVPVSMPHTKYSIVCYSILNQCEVASNMARYDGIEFGLRSKEKGNRKNSYVTTRYSGFNEVVRSRIIAGNFFLLSSNSNKYYEKALKVRRLIADDFNNAWRKGINILLTPTTLTDAPKYSEYIKKDEREQSAIQDYCTQPANMAGCPAISIPIELSKKGFPISLQLMAPKFEEKTLLGCALYIENAVNFKNMNEQ.

Active-site charge relay system residues include Lys-75 and Ser-162. Ser-186 functions as the Acyl-ester intermediate in the catalytic mechanism.

This sequence belongs to the amidase family. GatA subfamily. In terms of assembly, subunit of the heterotrimeric GatCAB amidotransferase (AdT) complex, composed of A, B and C subunits.

Its subcellular location is the mitochondrion. The enzyme catalyses L-glutamyl-tRNA(Gln) + L-glutamine + ATP + H2O = L-glutaminyl-tRNA(Gln) + L-glutamate + ADP + phosphate + H(+). Its function is as follows. Allows the formation of correctly charged Gln-tRNA(Gln) through the transamidation of misacylated Glu-tRNA(Gln) in the mitochondria. The reaction takes place in the presence of glutamine and ATP through an activated gamma-phospho-Glu-tRNA(Gln). The sequence is that of Glutamyl-tRNA(Gln) amidotransferase subunit A, mitochondrial from Pediculus humanus subsp. corporis (Body louse).